The following is a 166-amino-acid chain: Mitochondrial fission process protein 1 (166 aa).

2 helical membrane-spanning segments follow: residues 34–54 and 78–98; these read SLVP…YVLA and ALAV…IPGF. Lys-123 carries the N6-succinyllysine modification. The chain crosses the membrane as a helical span at residues 129–149; that stretch reads LGLLAIPVIIHPIDRSVDFLL.

The protein belongs to the MTFP1 family.

The protein resides in the mitochondrion inner membrane. Its function is as follows. Involved in the mitochondrial division probably by regulating membrane fission. Loss-of-function leads to apoptosis. The polypeptide is Mitochondrial fission process protein 1 (Mtfp1) (Mus musculus (Mouse)).